A 429-amino-acid polypeptide reads, in one-letter code: Chaperone SurA (429 aa).

The N-terminal stretch at 1-18 (MFKRIALVCALFSGVCFA) is a signal peptide. PpiC domains lie at 170–271 (NLTY…KLVA) and 281–380 (ITQT…EVIA).

It localises to the periplasm. The enzyme catalyses [protein]-peptidylproline (omega=180) = [protein]-peptidylproline (omega=0). Its function is as follows. Chaperone involved in the correct folding and assembly of outer membrane proteins. Recognizes specific patterns of aromatic residues and the orientation of their side chains, which are found more frequently in integral outer membrane proteins. May act in both early periplasmic and late outer membrane-associated steps of protein maturation. The polypeptide is Chaperone SurA (Legionella pneumophila (strain Lens)).